Here is a 505-residue protein sequence, read N- to C-terminus: Lysine--tRNA ligase (505 aa).

Mg(2+)-binding residues include glutamate 415 and glutamate 422.

It belongs to the class-II aminoacyl-tRNA synthetase family. As to quaternary structure, homodimer. Mg(2+) serves as cofactor.

It localises to the cytoplasm. It catalyses the reaction tRNA(Lys) + L-lysine + ATP = L-lysyl-tRNA(Lys) + AMP + diphosphate. The protein is Lysine--tRNA ligase of Enterobacter sp. (strain 638).